The sequence spans 196 residues: Oocyte zinc finger protein XlCOF26 (196 aa).

C2H2-type zinc fingers lie at residues 6 to 28, 34 to 56, 62 to 84, 90 to 112, 118 to 140, 146 to 168, and 174 to 196; these read YSCT…QKNH, FTCT…QRIH, FTCT…HKIH, FTCP…QRTH, FTCT…QSTH, and FTCT…QMTH.

The protein belongs to the krueppel C2H2-type zinc-finger protein family.

It localises to the nucleus. May be involved in transcriptional regulation. The protein is Oocyte zinc finger protein XlCOF26 of Xenopus laevis (African clawed frog).